Reading from the N-terminus, the 239-residue chain is tRNA (guanine-N(1)-)-methyltransferase (239 aa).

S-adenosyl-L-methionine is bound by residues G113 and 137-142 (LGDYVL).

This sequence belongs to the RNA methyltransferase TrmD family. Homodimer.

Its subcellular location is the cytoplasm. It catalyses the reaction guanosine(37) in tRNA + S-adenosyl-L-methionine = N(1)-methylguanosine(37) in tRNA + S-adenosyl-L-homocysteine + H(+). Its function is as follows. Specifically methylates guanosine-37 in various tRNAs. This is tRNA (guanine-N(1)-)-methyltransferase from Cutibacterium acnes (strain DSM 16379 / KPA171202) (Propionibacterium acnes).